The primary structure comprises 414 residues: Esterase FrsA (414 aa).

This sequence belongs to the FrsA family.

It carries out the reaction a carboxylic ester + H2O = an alcohol + a carboxylate + H(+). Functionally, catalyzes the hydrolysis of esters. This is Esterase FrsA from Shigella sonnei (strain Ss046).